Consider the following 95-residue polypeptide: Putative regulatory protein Daud_1598 (95 aa).

This sequence belongs to the RemA family.

The polypeptide is Putative regulatory protein Daud_1598 (Desulforudis audaxviator (strain MP104C)).